A 674-amino-acid chain; its full sequence is Glutaminase kidney isoform, mitochondrial (674 aa).

The N-terminal 54 residues, 1–54 (MMRLRGSAMLRELLLRPPAAVGGVLRRTQPLGTLCRRPRGGSRPAAGLVAAARL), are a transit peptide targeting the mitochondrion. The disordered stretch occupies residues 56 to 123 (PWWGGGGRAK…PGETDAFGNS (68 aa)). The span at 58 to 71 (WGGGGRAKGPGSGG) shows a compositional bias: gly residues. Residues 89–101 (PPQQQQQQQQQPG) show a composition bias toward low complexity. Lys135 and Lys169 each carry N6-succinyllysine. Ser291 is a binding site for substrate. Lys316 is subject to N6-acetyllysine. A highly mobile activation loop region spans residues 320–327 (GLRFNKLF). Asn340, Glu386, Asn393, Tyr419, Tyr471, and Val489 together coordinate substrate. 2 ANK repeats span residues 590 to 619 (DSRT…VNPF) and 624 to 653 (WNNT…QYTP). Residues 652–674 (TPQGDSDDGKENQTVHKNLDGLL) are disordered. Ser657 carries the phosphoserine modification. A compositionally biased stretch (basic and acidic residues) spans 658-674 (DDGKENQTVHKNLDGLL).

It belongs to the glutaminase family. As to quaternary structure, homotetramer, dimer of dimers. Tetramer composed of 68 and 65 kDa peptides in a 1:3 ratio. Can assemble into higher oligomers (in vitro), but the physiological significance of this is not clear. Interacts with RAF1 and MAP2K2. Interacts with ATCAY; the interaction is direct and may control GLS localization, negatively regulating its activity. In terms of processing, synthesized as a 74-kDa cytosolic precursor which is proteolytically processed by the mitochondrial-processing peptidase (MPP) via a 72-kDa intermediate to yield the mature mitochondrial 68- and 65-kDa subunits. In terms of tissue distribution, kidney, brain, and intestine.

It localises to the mitochondrion. The protein resides in the cytoplasm. It is found in the cytosol. Its subcellular location is the mitochondrion matrix. The catalysed reaction is L-glutamine + H2O = L-glutamate + NH4(+). Its activity is regulated as follows. Enzyme activity is increased by phosphate, due to increased kcat and increased substrate affinity. Catalyzes the first reaction in the primary pathway for the renal catabolism of glutamine. Plays a role in maintaining acid-base homeostasis. Regulates the levels of the neurotransmitter glutamate, the main excitatory neurotransmitter in the brain. This is Glutaminase kidney isoform, mitochondrial (Gls) from Rattus norvegicus (Rat).